A 449-amino-acid chain; its full sequence is Type 3 secretion system ATPase (449 aa).

178-183 (GCGKTT) provides a ligand contact to ATP.

It belongs to the ATPase alpha/beta chains family. T3SS ATPase subfamily. In terms of assembly, the core secretion machinery of the T3SS is composed of approximately 20 different proteins, including cytoplasmic components, a base, an export apparatus and a needle. This subunit is part of the cytosolic complex. Forms homododecamers.

It localises to the cytoplasm. It carries out the reaction ATP + H2O + cellular proteinSide 1 = ADP + phosphate + cellular proteinSide 2.. In terms of biological role, ATPase component of the type III secretion system (T3SS), also called injectisome, which is used to inject bacterial effector proteins into eukaryotic host cells. Acts as a molecular motor to provide the energy that is required for the export of proteins. Required for type III secretion apparatus (T3SA) formation, proper protein secretion, host cell invasion and virulence. May play a critical role in T3SS substrate recognition, disassembly of the effector/chaperone complex and unfolding of the effector in an ATP-dependent manner prior to secretion. The protein is Type 3 secretion system ATPase of Pseudomonas syringae pv. syringae.